Consider the following 227-residue polypeptide: PKHD-type hydroxylase Caul_0045 (227 aa).

The region spanning 78–178 (TILSPLFNRY…RTASFFWIQS (101 aa)) is the Fe2OG dioxygenase domain. Residues His96, Asp98, and His159 each coordinate Fe cation. Arg169 contacts 2-oxoglutarate.

Fe(2+) is required as a cofactor. Requires L-ascorbate as cofactor.

The protein is PKHD-type hydroxylase Caul_0045 of Caulobacter sp. (strain K31).